The following is a 322-amino-acid chain: uncharacterized protein (322 aa).

One can recognise a Radical SAM core domain in the interval 26 to 267 (HFGHKVFKVA…CDQLEIIPPE (242 aa)). [4Fe-4S] cluster is bound by residues C42, C54, and C57.

This sequence belongs to the radical SAM superfamily. The cofactor is [4Fe-4S] cluster.

This is an uncharacterized protein from Bacillus subtilis (strain 168).